Reading from the N-terminus, the 525-residue chain is Serine protease 1 (525 aa).

Positions 1-32 (MKCKKPSALFSALALVGALGAASVLGAASANS) are cleaved as a signal peptide. Residues 33–211 (ASPVAAATVQ…TVSDDVIVPV (179 aa)) constitute a propeptide that is removed on maturation. C223 and C239 are joined by a disulfide. Catalysis depends on charge relay system residues H238 and D270. 5 cysteine pairs are disulfide-bonded: C310/C320, C346/C376, C412/C431, C453/C472, and C496/C514. Catalysis depends on S352, which acts as the Charge relay system. A Ricin B-type lectin domain is found at 396 to 525 (TSTDVTTSYV…GGANQKWWRR (130 aa)). Positions 401–525 (TTSYVQGYQN…GGANQKWWRR (125 aa)) are essential for the lytic activity, but not for protease function.

The protein belongs to the peptidase S1 family.

It is found in the secreted. Functionally, major serine protease exhibiting lytic activity toward living yeast cells. Similar to elastase in its substrate specificity and has a lectin-like affinity for mannose. Mannoproteins may be the native substrate for RPI. In Rarobacter faecitabidus, this protein is Serine protease 1.